The primary structure comprises 1200 residues: Chromosome partition protein Smc (1200 aa).

32–39 (PNGCGKSN) contacts ATP. Coiled coils occupy residues 171–219 (VTKY…AEKY) and 252–342 (LENL…MSEA). One can recognise an SMC hinge domain in the interval 528–644 (QGIFGLVADV…QDVATARAWT (117 aa)). Coiled-coil stretches lie at residues 679-706 (ALQK…ILTR) and 735-762 (LASQ…LEVE). The segment at 763–795 (EGQLTQSHQALEHEEEASRGEVAHGQADREGRE) is disordered. Over residues 772 to 795 (ALEHEEEASRGEVAHGQADREGRE) the composition is skewed to basic and acidic residues. Residues 1002–1039 (HAELSKRYDFLTAQKKDLQSSIEQLKEAIQRIDATSRE) adopt a coiled-coil conformation.

Belongs to the SMC family. In terms of assembly, homodimer. Probably forms the Structural Maintenance of Chromosome (SMC) condensin-like complex with ScpA and ScpB.

Its subcellular location is the cytoplasm. Functionally, a conditionally essential component of the chromosome segregation machinery. Required for chromosome condensation and partitioning. Important for positioning of ParB-parS complexes (ori of replication) and of the ter replication site, as well as for segration of the ParB-parS complex and thus chromosome segregation. May act via the formation of a condensin-like complex containing Smc, ScpA and ScpB that pulls DNA away from mid-cell into both cell halves. This is Chromosome partition protein Smc from Myxococcus xanthus (strain DK1622).